The following is a 213-amino-acid chain: MSETAPAAPAAAPPAEKAPVKKKAAKKAGGTPRKASGPPVSELITKAVAASKERSGVSLAALKKALAAAGYDVEKNNSRIKLGLKSLVSKGTLVQTKGTGASGSFKLNKKAASGEAKPKVKKAGGTKPKKPVGAAKKPKKAAGGATPKKSAKKTPKKAKKPAAATVTKKVAKSPKKAKVAKPKKAAKSAAKAVKPKAAKPKVVKPKKAAPKKK.

Residues Met1–Lys17 are compositionally biased toward low complexity. The interval Met1–Ser41 is disordered. The residue at position 2 (Ser2) is an N-acetylserine; partial. Position 2 is a phosphoserine (Ser2). Lys17 carries the N6-acetyllysine modification. Lys23, Lys26, and Lys27 each carry N6-(2-hydroxyisobutyryl)lysine. Lys34 is modified (N6-(beta-hydroxybutyryl)lysine; alternate). Position 34 is an N6-crotonyllysine; alternate (Lys34). Lys34 carries the N6-methyllysine; alternate modification. Residues Ser36–Lys109 form the H15 domain. The residue at position 46 (Lys46) is an N6-(2-hydroxyisobutyryl)lysine. Lys52 is modified (N6-(beta-hydroxybutyryl)lysine; alternate). An N6-(2-hydroxyisobutyryl)lysine; alternate modification is found at Lys52. Arg54 carries the post-translational modification Citrulline. Lys63 bears the N6-(2-hydroxyisobutyryl)lysine mark. Residue Lys64 is modified to N6-(beta-hydroxybutyryl)lysine; alternate. At Lys64 the chain carries N6-crotonyllysine; alternate. Lys64 is modified (N6-(2-hydroxyisobutyryl)lysine; alternate). Residues Lys75 and Lys81 each carry the N6-(2-hydroxyisobutyryl)lysine modification. Lys85 and Lys90 each carry N6-(beta-hydroxybutyryl)lysine; alternate. N6-crotonyllysine; alternate occurs at positions 85, 90, and 97. N6-(2-hydroxyisobutyryl)lysine; alternate occurs at positions 85, 90, and 97. Residues Thr92–Lys213 form a disordered region. Lys97 carries the N6-succinyllysine; alternate modification. At Ser104 the chain carries Phosphoserine; by PKC. At Lys106 the chain carries N6-(beta-hydroxybutyryl)lysine. N6-(2-hydroxyisobutyryl)lysine is present on residues Lys110, Lys117, Lys121, Lys129, and Lys136. Over residues Lys119–Lys140 the composition is skewed to basic residues. Residue Thr146 is modified to Phosphothreonine. Lys148 carries the post-translational modification N6-(2-hydroxyisobutyryl)lysine. Over residues Lys149–Lys160 the composition is skewed to basic residues. Residues Lys159 and Lys168 each carry the N6-crotonyllysine; alternate modification. N6-(2-hydroxyisobutyryl)lysine; alternate is present on residues Lys159 and Lys168. The segment covering Lys169–Ala186 has biased composition (basic residues). Lys187 is modified (N6-methyllysine; by EHMT1 and EHMT2). Ser188 bears the ADP-ribosylserine mark. Residues Val193–Lys213 are compositionally biased toward basic residues. At Lys213 the chain carries N6-(2-hydroxyisobutyryl)lysine.

This sequence belongs to the histone H1/H5 family. As to quaternary structure, interacts with TSC22D1 isoforms 2 and 5. H1 histones are progressively phosphorylated during the cell cycle, becoming maximally phosphorylated during late G2 phase and M phase, and being dephosphorylated sharply thereafter. In terms of processing, crotonylation (Kcr) is specifically present in male germ cells and marks testis-specific genes in post-meiotic cells, including X-linked genes that escape sex chromosome inactivation in haploid cells. Crotonylation marks active promoters and enhancers and confers resistance to transcriptional repressors. It is also associated with post-meiotically activated genes on autosomes. Post-translationally, citrullination at Arg-54 (H1R54ci) by PADI4 takes place within the DNA-binding site of H1 and results in its displacement from chromatin and global chromatin decondensation, thereby promoting pluripotency and stem cell maintenance. ADP-ribosylated on Ser-188 in response to DNA damage.

It localises to the nucleus. The protein resides in the chromosome. Its function is as follows. Histone H1 protein binds to linker DNA between nucleosomes forming the macromolecular structure known as the chromatin fiber. Histones H1 are necessary for the condensation of nucleosome chains into higher-order structured fibers. Also acts as a regulator of individual gene transcription through chromatin remodeling, nucleosome spacing and DNA methylation. This chain is Histone H1.2, found in Homo sapiens (Human).